A 268-amino-acid polypeptide reads, in one-letter code: Dioscorin DB3S (268 aa).

One can recognise an Alpha-carbonic anhydrase domain in the interval 25 to 259; the sequence is DEFSYIEGNP…TNFRSVFYFE (235 aa). Residues Cys50 and Cys209 are joined by a disulfide bond. His91 acts as the Proton acceptor in catalysis. Residues Asp92, 117–119, Gln136, and 205–206 each bind L-ascorbate; these read HFH and TA.

The protein belongs to the alpha-class carbonic anhydrase family. As to quaternary structure, monomer. Homodimer. In terms of processing, not glycosylated. In terms of tissue distribution, expressed in tuber (at protein level).

It catalyses the reaction hydrogencarbonate + H(+) = CO2 + H2O. The catalysed reaction is 2 monodehydro-L-ascorbate radical + NADH + H(+) = 2 L-ascorbate + NAD(+). Storage protein of tuber. Involved in protection against oxidative stress. Has carbonate dehydratase and weak trypsin inhibitor activity detected by measuring the dehydration of sodium bicarbonate and the inhibition of trypsin-catalyzed hydrolysis of N-benzoyl-L-arginine-4-nitro anilide, respectively. Contrarily, no carbonate dehydratase or trypsin inhibitor activity detected by measuring the hydrolysis of 4-nitrophenyl acetate or the inhibition of bovine trypsin-catalyzed hydrolysis of N-benzoyl-L-arginine ethyl ester, respectively. Has dehydroascorbate (DHA) reductase and monodehydroascorbate (MDA) reductase activities. Catalyzes the reactions of carbonate dehydratase and DHA reductase independently of zinc and glutathione (GSH). The coupled reaction is capable of recycling a plant antioxidant ascorbate using ubiquitous compounds H(2)O and CO(2). Exhibits antioxidant activity. Able to scavenge 1,1-diphenyl-2-picrylhydrazyl (DPPH) radical and hydroxyl radicals. Exhibits immunomodulatory activity. Activates Toll-like receptor 4 signaling pathways by up-regulating the gene expression of pro-inflammatory cytokines, such as tumor necrosis factor alpha, interleukin-1 beta and interleukin-6, and chemokines RANTES and MCP-1, in mouse RAW 264.7 macrophages. Stimulates the phagocytosis of E.coli by the LPS-treated mouse macrophages. This is Dioscorin DB3S from Dioscorea polystachya (Chinese yam).